We begin with the raw amino-acid sequence, 575 residues long: Beta-amylase 1, chloroplastic (575 aa).

Residues 1 to 41 (MALNLSHQLGVLAGTPIKSGEMTDSSLLSISPPSARMMTPK) constitute a chloroplast transit peptide. Phosphoserine occurs at positions 55 and 59. A disulfide bond links C73 and C511. Residues D147, H187, and D195 each contribute to the substrate site. The Proton donor role is filled by E279. Substrate-binding residues include K392, H397, and T439. E477 serves as the catalytic Proton acceptor. Substrate-binding positions include 478–479 (NA) and R517.

The protein belongs to the glycosyl hydrolase 14 family. As to expression, expressed in leaves, roots, flowers, pollen, and seeds.

It is found in the plastid. It localises to the chloroplast. The catalysed reaction is Hydrolysis of (1-&gt;4)-alpha-D-glucosidic linkages in polysaccharides so as to remove successive maltose units from the non-reducing ends of the chains.. Its activity is regulated as follows. Redox regulation; active in reducing conditions, inactive in oxidizing conditions. Thioredoxins f1, m1, and y1 mediate the reversible reductive activation of oxidized BAM1. In terms of biological role, beta-amylase activity. Can use p-nitrophenyl maltopentaoside (PNPG5) as substrate only in reduced form. Can play a minor role in the starch degradation and maltose metabolism in chloroplasts during the night. More active on phosphorylated glucan. Interacts directly with starch or other alpha-1,4-glucan. The polypeptide is Beta-amylase 1, chloroplastic (BAM1) (Arabidopsis thaliana (Mouse-ear cress)).